Here is a 128-residue protein sequence, read N- to C-terminus: Large ribosomal subunit protein bL17 (128 aa).

It belongs to the bacterial ribosomal protein bL17 family. As to quaternary structure, part of the 50S ribosomal subunit. Contacts protein L32.

The sequence is that of Large ribosomal subunit protein bL17 from Pseudomonas savastanoi pv. phaseolicola (strain 1448A / Race 6) (Pseudomonas syringae pv. phaseolicola (strain 1448A / Race 6)).